We begin with the raw amino-acid sequence, 241 residues long: ATP synthase subunit a (241 aa).

The next 7 helical transmembrane spans lie at 29-49, 86-106, 114-134, 144-164, 177-197, 200-220, and 221-241; these read NSSL…LLGV, IPLV…GMLP, HVIV…IVGF, ILLP…IKLF, LAAN…FIMN, LILT…EVFV, and AILQ…DAVK.

The protein belongs to the ATPase A chain family. F-type ATPases have 2 components, CF(1) - the catalytic core - and CF(0) - the membrane proton channel. CF(1) has five subunits: alpha(3), beta(3), gamma(1), delta(1), epsilon(1). CF(0) has three main subunits: a(1), b(2) and c(9-12). The alpha and beta chains form an alternating ring which encloses part of the gamma chain. CF(1) is attached to CF(0) by a central stalk formed by the gamma and epsilon chains, while a peripheral stalk is formed by the delta and b chains.

The protein localises to the cell membrane. Key component of the proton channel; it plays a direct role in the translocation of protons across the membrane. The polypeptide is ATP synthase subunit a (Wolbachia sp. subsp. Brugia malayi (strain TRS)).